The primary structure comprises 54 residues: uncharacterized protein (54 aa).

The disordered stretch occupies residues V13–E54. Residues N20–A32 are compositionally biased toward polar residues. Positions I41–E54 are enriched in basic and acidic residues.

This is an uncharacterized protein from Enterobacteria phage T4 (Bacteriophage T4).